Here is a 472-residue protein sequence, read N- to C-terminus: Protein PIN-LIKES 1 (472 aa).

Residues 1-93 (MSLTQSAKLH…FYSMRMRLLD (93 aa)) lie on the Lumenal side of the membrane. Residues 94 to 114 (LFITSSIPVAKILLITGIGFY) form a helical membrane-spanning segment. The Cytoplasmic portion of the chain corresponds to 115-133 (LALDQVNILNHDARKQLNN). The chain crosses the membrane as a helical span at residues 134–154 (IVFYVFSPSLVASSLSETITY). Topologically, residues 155–161 (ESMVKMW) are lumenal. A helical membrane pass occupies residues 162 to 182 (FMPLNVLLTFIIGSFLGWIVI). Residues 183–193 (KITKPPSHLRG) are Cytoplasmic-facing. A helical membrane pass occupies residues 194–214 (IIVGCCAAGNLGNMPLIIIPA). The Lumenal portion of the chain corresponds to 215 to 231 (ICNEKGSPFGDPESCEK). Residues 232–252 (FGLGYIALSMAIGAIYIWTYV) form a helical membrane-spanning segment. The Cytoplasmic portion of the chain corresponds to 253–309 (YNLMRMLANPAGETAINSTSSTMPLISPKVEVAEQVGTWGKVKQRVCSVAEKINLRT). Residues 310-330 (IFAPSTIAALIALAVGLNPLL) form a helical membrane-spanning segment. The Lumenal portion of the chain corresponds to 331–347 (RKLLVGNTAPLRVIEDS). A helical transmembrane segment spans residues 348-368 (VSLLGDGAIPVLTLIVGGNLL). The Cytoplasmic segment spans residues 369–379 (NGLRGSGINKS). A helical membrane pass occupies residues 380 to 400 (VIMGVVVVRYLLLPILGVFIV). Over 401–413 (RGAHYLGLVTSEP) the chain is Lumenal. Residues 414-434 (LYQFVLLLQYVVPPAMNLGTI) form a helical membrane-spanning segment. The Cytoplasmic portion of the chain corresponds to 435 to 446 (TQLFGSGESECS). The chain crosses the membrane as a helical span at residues 447 to 467 (VILFWSYALASVSLTVWPTFF). Residues 468-472 (MWLVA) are Lumenal-facing.

The protein belongs to the auxin efflux carrier (TC 2.A.69.2) family. As to expression, expressed in flowers.

Its subcellular location is the endoplasmic reticulum membrane. Functionally, involved in cellular auxin homeostasis by regulating auxin metabolism. Regulates intracellular auxin accumulation at the endoplasmic reticulum and thus auxin availability for nuclear auxin signaling. The polypeptide is Protein PIN-LIKES 1 (Arabidopsis thaliana (Mouse-ear cress)).